The primary structure comprises 296 residues: Small ribosomal subunit protein uS2 (296 aa).

2 disordered regions span residues 1–24 (MNTK…TQSQ) and 270–296 (HELK…EASQ).

The protein belongs to the universal ribosomal protein uS2 family.

This is Small ribosomal subunit protein uS2 from Mycoplasmopsis synoviae (strain 53) (Mycoplasma synoviae).